Here is a 425-residue protein sequence, read N- to C-terminus: UPF0597 protein VIBHAR_03081 (425 aa).

Belongs to the UPF0597 family.

This Vibrio campbellii (strain ATCC BAA-1116) protein is UPF0597 protein VIBHAR_03081.